A 746-amino-acid polypeptide reads, in one-letter code: Methyl-CpG-binding domain-containing protein 13 (746 aa).

2 consecutive short sequence motifs (nuclear localization signal) follow at residues 13 to 20 (ERKVEIRV) and 44 to 51 (IKKLEITN). Residues 29 to 104 (VIVEKSAAQG…KESDIEDDDS (76 aa)) form the MBD domain. 6 disordered regions span residues 131-157 (IDDV…MTSD), 169-283 (LGKK…PTPE), 295-328 (PLDD…KTRT), 348-479 (TKVQ…LKSP), 518-562 (TAAG…SGSA), and 696-746 (EPDT…FSKD). The span at 169-180 (LGKKEEVKDPIE) shows a compositional bias: basic and acidic residues. Positions 190 to 199 (RSQTKASTTE) are enriched in polar residues. Over residues 244–260 (SSEKRITRSKVEEKKNE) the composition is skewed to basic and acidic residues. The Nuclear localization signal signature appears at 256–263 (EKKNELSN). A compositionally biased stretch (polar residues) spans 427 to 451 (VAQSCNEQSSQKPHAAAATSNNRVS). The span at 465–476 (VGRKPSKDKKTL) shows a compositional bias: basic residues. Composition is skewed to polar residues over residues 529 to 546 (PKAN…SPLR) and 702 to 730 (KSQG…TNKT). Residues 732–746 (GKPDDLRFTQSFSKD) show a composition bias toward basic and acidic residues.

It is found in the nucleus. Functionally, probable transcriptional regulator. In Arabidopsis thaliana (Mouse-ear cress), this protein is Methyl-CpG-binding domain-containing protein 13 (MBD13).